A 168-amino-acid polypeptide reads, in one-letter code: MAEPWGNELASAAARGDLEQLTSLLQNNVNVNAQNGFGRTALQVMKLGNPEIARRLLLRGANPNLKDGTGFAVIHDAARAGFLDTVQALLEFQADVNIEDNEGNLPLHLAAKEGHLPVVEFLMKHTACNVGHRNHKGDTAFDLARFYGRNEVISLMEANGVGGATSLQ.

5 ANK repeats span residues 4 to 33 (PWGN…NVNA), 37 to 65 (FGRT…NPNL), 69 to 98 (TGFA…DVNI), 102 to 132 (EGNL…NVGH), and 136 to 165 (KGDT…GGAT).

Belongs to the CDKN2 cyclin-dependent kinase inhibitor family. Heterodimer of p18 with CDK6.

Interacts strongly with CDK6, weakly with CDK4. Inhibits cell growth and proliferation with a correlated dependence on endogenous retinoblastoma protein RB. This Mus musculus (Mouse) protein is Cyclin-dependent kinase 4 inhibitor C (Cdkn2c).